The sequence spans 184 residues: Elongation factor P (184 aa).

It belongs to the elongation factor P family.

Its subcellular location is the cytoplasm. It functions in the pathway protein biosynthesis; polypeptide chain elongation. Functionally, involved in peptide bond synthesis. Stimulates efficient translation and peptide-bond synthesis on native or reconstituted 70S ribosomes in vitro. Probably functions indirectly by altering the affinity of the ribosome for aminoacyl-tRNA, thus increasing their reactivity as acceptors for peptidyl transferase. This chain is Elongation factor P, found in Albidiferax ferrireducens (strain ATCC BAA-621 / DSM 15236 / T118) (Rhodoferax ferrireducens).